The sequence spans 891 residues: Valine--tRNA ligase (891 aa).

The short motif at 43–53 (PFTSGTLHLGH) is the 'HIGH' region element. A 'KMSKS' region motif is present at residues 536-540 (KMSKS). K539 serves as a coordination point for ATP.

Belongs to the class-I aminoacyl-tRNA synthetase family. ValS type 2 subfamily.

The protein resides in the cytoplasm. It catalyses the reaction tRNA(Val) + L-valine + ATP = L-valyl-tRNA(Val) + AMP + diphosphate. In terms of biological role, catalyzes the attachment of valine to tRNA(Val). As ValRS can inadvertently accommodate and process structurally similar amino acids such as threonine, to avoid such errors, it has a 'posttransfer' editing activity that hydrolyzes mischarged Thr-tRNA(Val) in a tRNA-dependent manner. The sequence is that of Valine--tRNA ligase from Pyrococcus horikoshii (strain ATCC 700860 / DSM 12428 / JCM 9974 / NBRC 100139 / OT-3).